Here is a 116-residue protein sequence, read N- to C-terminus: MRHQLRIPLLSKPADQRKALLRGLTTQLIREGRVTTTKARAKALRNEAERMISLAKDGSLASRRRAIGYIYDKKLVHSLFEKAQERYGDRKGGYTRIVRTVSRKGDNAQMAIIELV.

It belongs to the bacterial ribosomal protein bL17 family. As to quaternary structure, part of the 50S ribosomal subunit. Contacts protein L32.

The sequence is that of Large ribosomal subunit protein bL17 from Prochlorococcus marinus (strain MIT 9312).